A 176-amino-acid polypeptide reads, in one-letter code: Viral interleukin-10 homolog (176 aa).

A signal peptide spans 1-25; sequence MLSVMVSSSLVLIVFFLGASEEAKP. Cystine bridges form between C38-C128 and C82-C133. An N-linked (GlcNAc...) asparagine; by host glycan is attached at N152.

This sequence belongs to the IL-10 family. As to quaternary structure, homodimer; disulfide-linked.

Its subcellular location is the secreted. Functionally, functional viral IL-10 homolog. Can bind to the human IL-10 receptor and compete with human IL-10 for binding sites. Requires both subunits of the human IL-10 receptor complex to induce signal transduction events and biological activities. IL-10 signaling pathway has several immunosuppressive activities that are exploited by the virus. Inhibits TLR-induced type I interferon production in host plasmacytoid dendritic cells. The protein is Viral interleukin-10 homolog (UL111A) of Homo sapiens (Human).